Consider the following 98-residue polypeptide: Gas vesicle protein J2 (98 aa).

Residues 75–98 (AGVDADDSKSVLERPDPPTTEGSE) form a disordered region. Positions 80 to 90 (DDSKSVLERPD) are enriched in basic and acidic residues.

This sequence belongs to the gas vesicle GvpA family. As to quaternary structure, gvpF to GvpM interact with each other in vitro, and may form multi-subunit complex(es). Interacts with GvpA.

The protein resides in the gas vesicle. Functionally, a minor component of the gas vesicle. Proteins GvpF to GvpM might be involved in nucleating gas vesicle formation. Gas vesicles are hollow, gas filled proteinaceous nanostructures found in several microbial planktonic microorganisms. They allow positioning of halobacteria at the optimal depth for growth in the poorly aerated, shallow brine pools of their habitat. Its function is as follows. Expression of 2 c-vac DNA fragments containing 2 divergently transcribed regions (gvpE-gvpF-gvpG-gvpH-gvpI-gvpJ-gvpK-gvpL-gvpM and gvpA-gvpC-gvpN-gvpO) allows H.volcanii to produce gas vesicles. In Halobacterium salinarum (strain ATCC 700922 / JCM 11081 / NRC-1) (Halobacterium halobium), this protein is Gas vesicle protein J2.